A 580-amino-acid chain; its full sequence is Probable inactive 1-aminocyclopropane-1-carboxylate synthase-like protein 2 (580 aa).

The tract at residues methionine 1–lysine 43 is disordered. The segment covering glutamate 7–serine 23 has biased composition (polar residues). The residue at position 417 (lysine 417) is an N6-(pyridoxal phosphate)lysine.

Belongs to the class-I pyridoxal-phosphate-dependent aminotransferase family.

The polypeptide is Probable inactive 1-aminocyclopropane-1-carboxylate synthase-like protein 2 (Accsl) (Mus musculus (Mouse)).